The primary structure comprises 1135 residues: Envelopment polyprotein (1135 aa).

Residues 1-18 form the signal peptide; it reads MGIWKWLVMASLVWPVLT. Topologically, residues 19-485 are lumenal; that stretch reads LRNVYDMKIE…VPGFHGWATA (467 aa). 11 cysteine pairs are disulfide-bonded: Cys29–Cys151, Cys63–Cys157, Cys109–Cys128, Cys133–Cys138, Cys175–Cys185, Cys210–Cys247, Cys234–Cys351, Cys376–Cys435, Cys380–Cys389, Cys405–Cys424, and Cys452–Cys475. Residue Asn134 is glycosylated (N-linked (GlcNAc...) asparagine; by host). Asn235 and Asn347 each carry an N-linked (GlcNAc...) asparagine; by host glycan. Residue Asn399 is glycosylated (N-linked (GlcNAc...) asparagine; by host). The chain crosses the membrane as a helical span at residues 486 to 506; sequence ALLVTFCFGWVLIPAITFIIL. The Cytoplasmic segment spans residues 507-627; sequence TILKFIANIF…LNLFRYKSRC (121 aa). The binding to the ribonucleoprotein stretch occupies residues 516–533; sequence FHTSNQENRLKSVLRKIK. 2 CCHC-type zinc fingers span residues 545–565 and 570–591; these read CDVCKYECETYKELKAHGVSC and CPYCFTHCEPTEAAFQAHYKVC. Binding to the ribonucleoprotein regions lie at residues 588-605, 592-603, and 611-625; these read YKVCQVTHRFRDDLKKTV, QVTHRFRDDLKK, and TPGCYRTLNLFRYKS. An ITAM domain is found at 611–634; the sequence is TPGCYRTLNLFRYKSRCYIFTMWI. The YxxL signature appears at 615 to 618; sequence YRTL. The helical transmembrane segment at 628 to 648 threads the bilayer; that stretch reads YIFTMWIFLLVLESILWAASA. Residues 649 to 1105 are Lumenal-facing; it reads SETPLTPVWN…EWISGIFSGN (457 aa). 8 disulfide bridges follow: Cys735–Cys770, Cys739–Cys777, Cys751–Cys885, Cys765–Cys896, Cys780–Cys904, Cys806–Cys815, Cys823–Cys832, and Cys863–Cys867. The interval 757–777 is fusion loop; that stretch reads YQYETSWGCNPSDCPGVGTGC. A glycan (N-linked (GlcNAc...) asparagine; by host) is linked at Asn928. Disulfide bonds link Cys970/Cys1000, Cys993/Cys1045, Cys1010/Cys1015, Cys1046/Cys1051, and Cys1085/Cys1089. A helical transmembrane segment spans residues 1106-1126; the sequence is WIVLIVLCVFLLFSLVLLSIL. A binding to the ribonucleoprotein region spans residues 1122–1135; the sequence is LLSILCPVRKHKKS. At 1127–1135 the chain is on the cytoplasmic side; the sequence is CPVRKHKKS.

The protein belongs to the hantavirus envelope glycoprotein family. In terms of assembly, homodimer. Homotetramer; forms heterotetrameric Gn-Gc spikes in the pre-fusion conformation. Interacts (via C-terminus) with the nucleoprotein. Interacts with host TUFM; this interaction contributes to the virus-induced degradation of mitochondria by autophagy, which leads to degradation of host MAVS and inhibition of type I interferon (IFN) responses. Interacts with host MAP1LC3B; this interaction contributes to the virus-induced degradation of mitochondria by autophagy, which leads to degradation of host MAVS and inhibition of type I interferon (IFN) responses. As to quaternary structure, homodimer. Homotetramer; forms heterotetrameric Gn-Gc spikes in the pre-fusion conformation. Homotrimer; forms homotrimer in the post-fusion conformation at acidic pH. Interacts (via C-terminus) with the nucleoprotein. Envelope polyprotein precursor is quickly cleaved in vivo just after synthesis, presumably by host signal peptidase.

Its subcellular location is the virion membrane. It is found in the host cell surface. The protein localises to the host Golgi apparatus membrane. It localises to the host endoplasmic reticulum membrane. The protein resides in the host mitochondrion. Forms homotetramers with glycoprotein C at the surface of the virion. Attaches the virion to host cell receptors including integrin ITGAV/ITGB3. This attachment induces virion internalization predominantly through clathrin-dependent endocytosis. May also bind to host C1QBP for virus entry into the host cell. Mediates the assembly and budding of infectious virus particles through its interaction with the nucleocapsid protein and the viral genome. May dysregulate normal immune and endothelial cell responses through an ITAM motif. Translocates to mitochondria, binds to host TUFM and recruits MAP1LC3B. These interactions induce mitochondrial autophagy and therefore destruction of host MAVS leading to inhibition of type I interferon (IFN) responses. Concomitant breakdown of glycoprotein N is apparently prevented by the nucleoprotein that may inhibit Gn-stimulated autophagosome-lysosome fusion. Interacts with the viral genomic RNA. In terms of biological role, forms homotetramers with glycoprotein N at the surface of the virion. Attaches the virion to host cell receptors including integrin ITGAV/ITGB3. This attachment induces virion internalization predominantly through clathrin-dependent endocytosis. May also bind to host C1QBP for virus entry into the host cell. Class II fusion protein that promotes fusion of viral membrane with host endosomal membrane after endocytosis of the virion. This chain is Envelopment polyprotein (GP), found in Hantaan virus (strain Lee) (Lee virus).